Here is a 221-residue protein sequence, read N- to C-terminus: Oxaloacetate tautomerase FAHD1, mitochondrial (221 aa).

The N-terminal 24 residues, 1–24 (MASTKPLSRFWEWGKNIVCVGRNY), are a transit peptide targeting the mitochondrion. An oxalate-binding site is contributed by arginine 22. Serine 37 carries the phosphoserine modification. Residues glutamate 68, glutamate 70, and aspartate 99 each coordinate Mg(2+). Position 110 is an N6-acetyllysine (lysine 110). Lysine 112 is modified (N6-succinyllysine). Residue lysine 120 participates in oxalate binding.

Belongs to the FAH family. Homodimer. Mg(2+) serves as cofactor. Requires Mn(2+) as cofactor. In terms of tissue distribution, ubiquitous with higher expression in the liver and the kidney (at protein level).

Its subcellular location is the mitochondrion. The protein resides in the cytoplasm. It localises to the cytosol. The enzyme catalyses oxaloacetate = enol-oxaloacetate. It carries out the reaction oxaloacetate + H(+) = pyruvate + CO2. The catalysed reaction is a 3-acylpyruvate + H2O = a carboxylate + pyruvate + H(+). It catalyses the reaction acetylpyruvate + H2O = acetate + pyruvate + H(+). The enzyme catalyses 3-fumarylpyruvate + H2O = fumarate + pyruvate + H(+). With respect to regulation, oxaloacetate decarboxylation is potently and competitively inhibited by oxalate. In terms of biological role, tautomerase that converts enol-oxaloacetate, a strong inhibitor of succinate dehydrogenase, to the physiological keto form of oxaloacetate. It is thereby required to maximize aerobic respiration efficiency by preventing succinate dehydrogenase inhibition. Also acts as a weak oxaloacetate decarboxylase (ODx), catalyzing the decarboxylation of oxaloacetate (OAA) to pyruvate and CO(2), and as such is likely a regulatory enzyme in the TCA cycle. Also displays acylpyruvase activity, being able to hydrolyze acetylpyruvate and fumarylpyruvate in vitro. The chain is Oxaloacetate tautomerase FAHD1, mitochondrial from Mus musculus (Mouse).